The chain runs to 561 residues: Arginine--tRNA ligase (561 aa).

A 'HIGH' region motif is present at residues 108–118; it reads PNVAKEMHVGH.

The protein belongs to the class-I aminoacyl-tRNA synthetase family. As to quaternary structure, monomer.

The protein resides in the cytoplasm. It carries out the reaction tRNA(Arg) + L-arginine + ATP = L-arginyl-tRNA(Arg) + AMP + diphosphate. This Haemophilus ducreyi (strain 35000HP / ATCC 700724) protein is Arginine--tRNA ligase.